The chain runs to 33 residues: Photosystem II reaction center protein Psb30 (33 aa).

A helical membrane pass occupies residues 5–25 (LIVQLTSLILISIAGPIIIAL).

It belongs to the Psb30/Ycf12 family. In terms of assembly, PSII is composed of 1 copy each of membrane proteins PsbA, PsbB, PsbC, PsbD, PsbE, PsbF, PsbH, PsbI, PsbJ, PsbK, PsbL, PsbM, PsbT, PsbY, PsbZ, Psb30/Ycf12, peripheral proteins of the oxygen-evolving complex and a large number of cofactors. It forms dimeric complexes.

It localises to the plastid. The protein resides in the chloroplast thylakoid membrane. In terms of biological role, a core subunit of photosystem II (PSII), probably helps stabilize the reaction center. The sequence is that of Photosystem II reaction center protein Psb30 from Euglena myxocylindracea.